The sequence spans 174 residues: ATP-dependent protease subunit HslV (174 aa).

The active site involves Thr2. Na(+)-binding residues include Gly157, Cys160, and Thr163.

It belongs to the peptidase T1B family. HslV subfamily. As to quaternary structure, a double ring-shaped homohexamer of HslV is capped on each side by a ring-shaped HslU homohexamer. The assembly of the HslU/HslV complex is dependent on binding of ATP.

It localises to the cytoplasm. It carries out the reaction ATP-dependent cleavage of peptide bonds with broad specificity.. With respect to regulation, allosterically activated by HslU binding. In terms of biological role, protease subunit of a proteasome-like degradation complex believed to be a general protein degrading machinery. This chain is ATP-dependent protease subunit HslV, found in Shewanella piezotolerans (strain WP3 / JCM 13877).